The primary structure comprises 550 residues: Dihydroxy-acid dehydratase (550 aa).

Aspartate 78 contributes to the Mg(2+) binding site. Cysteine 119 contacts [2Fe-2S] cluster. Mg(2+) contacts are provided by aspartate 120 and lysine 121. Lysine 121 carries the N6-carboxylysine modification. [2Fe-2S] cluster is bound at residue cysteine 191. Position 440 (glutamate 440) interacts with Mg(2+). Serine 466 (proton acceptor) is an active-site residue.

Belongs to the IlvD/Edd family. In terms of assembly, homodimer. The cofactor is [2Fe-2S] cluster. Requires Mg(2+) as cofactor.

The enzyme catalyses (2R)-2,3-dihydroxy-3-methylbutanoate = 3-methyl-2-oxobutanoate + H2O. It catalyses the reaction (2R,3R)-2,3-dihydroxy-3-methylpentanoate = (S)-3-methyl-2-oxopentanoate + H2O. The protein operates within amino-acid biosynthesis; L-isoleucine biosynthesis; L-isoleucine from 2-oxobutanoate: step 3/4. It functions in the pathway amino-acid biosynthesis; L-valine biosynthesis; L-valine from pyruvate: step 3/4. Functionally, functions in the biosynthesis of branched-chain amino acids. Catalyzes the dehydration of (2R,3R)-2,3-dihydroxy-3-methylpentanoate (2,3-dihydroxy-3-methylvalerate) into 2-oxo-3-methylpentanoate (2-oxo-3-methylvalerate) and of (2R)-2,3-dihydroxy-3-methylbutanoate (2,3-dihydroxyisovalerate) into 2-oxo-3-methylbutanoate (2-oxoisovalerate), the penultimate precursor to L-isoleucine and L-valine, respectively. In Methanococcus maripaludis (strain C7 / ATCC BAA-1331), this protein is Dihydroxy-acid dehydratase.